A 385-amino-acid chain; its full sequence is DNA replication and repair protein RecF (385 aa).

30-37 is a binding site for ATP; that stretch reads GANAAGKT.

Belongs to the RecF family.

The protein localises to the cytoplasm. Functionally, the RecF protein is involved in DNA metabolism; it is required for DNA replication and normal SOS inducibility. RecF binds preferentially to single-stranded, linear DNA. It also seems to bind ATP. This chain is DNA replication and repair protein RecF, found in Herpetosiphon aurantiacus (strain ATCC 23779 / DSM 785 / 114-95).